The primary structure comprises 824 residues: MEFIPTQTFYNRRYQPRPWTPRPTIQVIRPRPRPQRQAGQLAQLISAVNKLTMRAVPQQKPRKNRKNKKQKQKQQAPQNNTNQKKQPPKKKPAQKKKKPGRRERMCMKIENDCIFEVKHEGKVTGYACLVGDKVMKPAHVKGTIDNADLAKLAFKRSSKYDLECAQIPVHMKSDASKFTHEKPEGYYNWHHGAVQYSGGRFTIPTGAGKPGDSGRPIFDNKGRVVAIVLGGANEGARTALSVVTWNKDIVTKITPEGAEEWSLAIPVMCLLANTTFPCSQPPCIPCCYEKEPEETLRMLEDNVMRPGYYQLLQASLTCSPHRQRRSTKDNFNVYKATRPYLAHCPDCGEGHSCHSPVALERIRNEATDGTLKIQVSLQIGIGTDDSHDWTKLRYMDNHIPADAGRAGLFVRTSAPCTITGTMGHFILARCPKGETLTVGFTDSRKISHSCTHPFHHDPPVIGREKFHSRPQHGKELPCSTYVQSNAATAEEIEVHMPPDTPDRTLLSQQSGNVKITVNSQTVRYKCNCGGSNEGLITTDKVINNCKVDQCHAAVTNHKKWQYNSPLVPRNAELGDRKGKIHIPFPLANVTCMVPKARNPTVTYGKNQVIMLLYPDHPTLLSYRSMGEEPNYQEEWVTHKKEVVLTVPTEGLEVTWGNNEPYKYWPQLSANGTAHGHPHEIILYYYELYPTMTVVVVSVASFILLSMVGMAVGMCMCARRRCITPYELTPGATVPFLLSLICCIRTAKAATYQEAAVYLWNEQQPLFWLQALIPLAALIVLCNCLRLLPCCCKTLAFLSRNEHRCPHCERVRTRNSDPEHGGSTV.

Residues methionine 1–tyrosine 10 show a composition bias toward polar residues. The disordered stretch occupies residues methionine 1–arginine 104. The span at arginine 22 to leucine 44 shows a compositional bias: low complexity. A host transcription inhibition region spans residues arginine 36–lysine 68. Positions lysine 60–glutamine 72 are enriched in basic residues. Residues proline 61–proline 99 carry the Nuclear localization signal motif. Low complexity predominate over residues lysine 73 to lysine 85. The tract at residues lysine 84–isoleucine 114 is binding to the viral RNA. Basic residues predominate over residues glutamine 86–arginine 101. Ribosome-binding regions lie at residues lysine 91–glycine 100 and proline 99–cysteine 113. A disulfide bridge links cysteine 113 with cysteine 128. The 149-residue stretch at cysteine 113–tryptophan 261 folds into the Peptidase S3 domain. Catalysis depends on histidine 139, which acts as the Charge relay system. Positions isoleucine 144–phenylalanine 154 match the Nuclear export signal motif. The Charge relay system role is filled by aspartate 161. Residues proline 183–alanine 193 form a dimerization of the capsid protein region. The active-site Charge relay system is serine 213. Positions aspartate 219–arginine 223 are dimerization of the capsid protein. The tract at residues serine 262 to threonine 274 is functions as an uncleaved signal peptide for the precursor of protein E3/E2. Residues serine 262–threonine 692 lie on the Extracellular side of the membrane. Asparagine 273, asparagine 588, and asparagine 670 each carry an N-linked (GlcNAc...) asparagine; by host glycan. A helical membrane pass occupies residues valine 693–methionine 713. The Cytoplasmic portion of the chain corresponds to cysteine 714 to alanine 748. S-palmitoyl cysteine; by host attachment occurs at residues cysteine 721, cysteine 741, and cysteine 742. Residues cysteine 721–cysteine 741 are transient transmembrane before p62-6K protein processing. Over alanine 749–glutamine 763 the chain is Extracellular. Residues proline 764–leucine 784 form a helical membrane-spanning segment. The Cytoplasmic segment spans residues arginine 785–alanine 795.

It belongs to the alphavirus frameshifted structural polyprotein family. Homodimer. Homomultimer. Interacts with host karyopherin KPNA4; this interaction allows the nuclear import of the viral capsid protein. Interacts with spike glycoprotein E2. Interacts with host IRAK1; the interaction leads to inhibition of IRAK1-dependent signaling. In terms of assembly, the precursor of protein E3/E2 and E1 form a heterodimer shortly after synthesis. As to quaternary structure, processing of the precursor of protein E3/E2 into E2 and E3 results in a heterodimer of the spike glycoproteins E2 and E1. Spike at virion surface are constituted of three E2-E1 heterodimers. Interacts with 6K protein. Interacts with host MXRA8; this interaction mediates virus entry. Post-translationally, specific enzymatic cleavages in vivo yield mature proteins. Capsid protein is auto-cleaved during polyprotein translation, unmasking a signal peptide at the N-terminus of the precursor of E3/E2. The remaining polyprotein is then targeted to the host endoplasmic reticulum, where host signal peptidase cleaves it into pE2 and TF. pE2 is further processed to mature E3 and E2 by host furin in trans-Golgi vesicle. Palmitoylated via thioester bonds. These palmitoylations may induce disruption of the C-terminus transmembrane. This would result in the reorientation of E2 C-terminus from lumenal to cytoplasmic side. In terms of processing, palmitoylated via thioester bonds.

It is found in the virion. Its subcellular location is the host cytoplasm. It localises to the host cell membrane. The protein resides in the host nucleus. The protein localises to the virion membrane. The catalysed reaction is Autocatalytic release of the core protein from the N-terminus of the togavirus structural polyprotein by hydrolysis of a -Trp-|-Ser- bond.. Functionally, forms an icosahedral capsid with a T=4 symmetry composed of 240 copies of the capsid protein surrounded by a lipid membrane through which penetrate 80 spikes composed of trimers of E1-E2 heterodimers. The capsid protein binds to the viral RNA genome at a site adjacent to a ribosome binding site for viral genome translation following genome release. Possesses a protease activity that results in its autocatalytic cleavage from the nascent structural protein. Following its self-cleavage, the capsid protein transiently associates with ribosomes, and within several minutes the protein binds to viral RNA and rapidly assembles into icosahedric core particles. The resulting nucleocapsid eventually associates with the cytoplasmic domain of the spike glycoprotein E2 at the cell membrane, leading to budding and formation of mature virions. In case of infection, new virions attach to target cells and after clathrin-mediated endocytosis their membrane fuses with the host endosomal membrane. This leads to the release of the nucleocapsid into the cytoplasm, followed by an uncoating event necessary for the genomic RNA to become accessible. The uncoating might be triggered by the interaction of capsid proteins with ribosomes. Binding of ribosomes would release the genomic RNA since the same region is genomic RNA-binding and ribosome-binding. Specifically inhibits interleukin-1 receptor-associated kinase 1/IRAK1-dependent signaling during viral entry, representing a means by which the alphaviruses may evade innate immune detection and activation prior to viral gene expression. Provides the signal sequence for the translocation of the precursor of protein E3/E2 to the host endoplasmic reticulum. Furin-cleaved E3 remains associated with spike glycoprotein E1 and mediates pH protection of the latter during the transport via the secretory pathway. After virion release from the host cell, the assembly protein E3 is gradually released in the extracellular space. In terms of biological role, plays a role in viral attachment to target host cell, by binding to the cell receptor. Synthesized as a p62 precursor which is processed by furin at the cell membrane just before virion budding, giving rise to E2-E1 heterodimer. The p62-E1 heterodimer is stable, whereas E2-E1 is unstable and dissociate at low pH. p62 is processed at the last step, presumably to avoid E1 fusion activation before its final export to cell surface. E2 C-terminus contains a transitory transmembrane that would be disrupted by palmitoylation, resulting in reorientation of the C-terminal tail from lumenal to cytoplasmic side. This step is critical since E2 C-terminus is involved in budding by interacting with capsid proteins. This release of E2 C-terminus in cytoplasm occurs lately in protein export, and precludes premature assembly of particles at the endoplasmic reticulum membrane. Its function is as follows. Plays a role in viral assembly and release. The chain is Frameshifted structural polyprotein from Aedes aegypti (Yellowfever mosquito).